A 620-amino-acid chain; its full sequence is Protein NRT1/ PTR FAMILY 2.13 (620 aa).

Residues methionine 1 to proline 32 form a disordered region. Over residues serine 10–serine 25 the composition is skewed to low complexity. A run of 12 helical transmembrane segments spans residues leucine 70–glutamate 90, alanine 95–isoleucine 115, isoleucine 126–phenylalanine 146, lysine 167–isoleucine 187, phenylalanine 213–valine 233, tryptophan 241–alanine 261, isoleucine 364–phenylalanine 384, isoleucine 402–tyrosine 422, leucine 443–valine 463, valine 485–glycine 505, serine 524–valine 544, and tyrosine 568–alanine 588.

Belongs to the major facilitator superfamily. Proton-dependent oligopeptide transporter (POT/PTR) (TC 2.A.17) family. As to quaternary structure, interacts with NLA. Ubiquitinated by NLA. Ubiquitination of NPF2.13 leads to its degradation by the proteasome. In terms of tissue distribution, expressed in leaves and flowers. Detected in stems and siliques. Highest expression in the distal lamina of older leaves. Restricted to the sieve element and companion cell complex of the minor vein.

Its subcellular location is the cell membrane. Functionally, low-affinity proton-dependent nitrate transporter. Not involved in dipeptides transport, but has a weak glucosinolate transport activity. Involved in phloem loading and nitrate remobilization from the older leaves to other tissues. This chain is Protein NRT1/ PTR FAMILY 2.13 (NPF2.13), found in Arabidopsis thaliana (Mouse-ear cress).